Here is a 417-residue protein sequence, read N- to C-terminus: Serine hydroxymethyltransferase (417 aa).

(6S)-5,6,7,8-tetrahydrofolate-binding positions include L121 and 125–127 (GHL). The residue at position 229 (K229) is an N6-(pyridoxal phosphate)lysine. A (6S)-5,6,7,8-tetrahydrofolate-binding site is contributed by 355-357 (SPF).

It belongs to the SHMT family. Homodimer. Pyridoxal 5'-phosphate serves as cofactor.

It localises to the cytoplasm. The enzyme catalyses (6R)-5,10-methylene-5,6,7,8-tetrahydrofolate + glycine + H2O = (6S)-5,6,7,8-tetrahydrofolate + L-serine. It participates in one-carbon metabolism; tetrahydrofolate interconversion. Its pathway is amino-acid biosynthesis; glycine biosynthesis; glycine from L-serine: step 1/1. Its function is as follows. Catalyzes the reversible interconversion of serine and glycine with tetrahydrofolate (THF) serving as the one-carbon carrier. This reaction serves as the major source of one-carbon groups required for the biosynthesis of purines, thymidylate, methionine, and other important biomolecules. Also exhibits THF-independent aldolase activity toward beta-hydroxyamino acids, producing glycine and aldehydes, via a retro-aldol mechanism. The polypeptide is Serine hydroxymethyltransferase (Shewanella sp. (strain W3-18-1)).